Here is a 303-residue protein sequence, read N- to C-terminus: Methionyl-tRNA formyltransferase (303 aa).

Residue 108–111 coordinates (6S)-5,6,7,8-tetrahydrofolate; that stretch reads SDLP.

The protein belongs to the Fmt family.

It catalyses the reaction L-methionyl-tRNA(fMet) + (6R)-10-formyltetrahydrofolate = N-formyl-L-methionyl-tRNA(fMet) + (6S)-5,6,7,8-tetrahydrofolate + H(+). Attaches a formyl group to the free amino group of methionyl-tRNA(fMet). The formyl group appears to play a dual role in the initiator identity of N-formylmethionyl-tRNA by promoting its recognition by IF2 and preventing the misappropriation of this tRNA by the elongation apparatus. This is Methionyl-tRNA formyltransferase from Rickettsia peacockii (strain Rustic).